The chain runs to 858 residues: MENTTPLRKQYLDIKKNYPEAIVFFRLGDFYETFEEDARIAARELEIVLTSREMGKGLKVPLAGIPYHALDNYLSRLINKGYKVAICEQVTKPGETKGLVQRQVTRLVTPGTVVEPNLLQTKQNNFLLSLYLTEDSCGLAFADISTSEFGCTQTNIGELEAEISRLSPAEIILPKNQSLNLPIHLKATISKLDGYYFEADIAREHLLRHFECQNLSAYGCENMPLAISAAGALLNYLEETQKSSLKQLERLSVYTTADYMQMDSHTLSNLEIFRSSGGNSLKGSLLGILDQTRTAMGGRLLRKFLGQPLLKQSDIEKRLSAVDYFFEESLARTSLAKSLGQIADMERMANRIRQKTILPRELISLKNSLETVSAIHRQFGLMPPPRLAYFLNGLKPLPEMLDIINKTITDDPPSTLGDGKVIRAGFDPEMDKLCSLAGDARTFLSQMETRERERTGIKSLKLGYNRVFGYYIEISNANLGDMPPEFIRKQTLVNAERFITPELKEYENLILNAKERLLEMETGLYEQVLNQLGGFYSALLANAAALAALDVLSAFAEVAVRNSYVRPVFHPENRLDIRKGRHPMVEQGLGYGSFVANDISLSAEDCQIIILTGPNMAGKSTYLKQTALIVLMAQIGSYVPAETAELCLTDRIFTRIGAREDLSAGQSTFMVEMVETASILNTATSRSLLILDEIGRGTSTYDGLAIAQAVVEYIHSQPSLTAKTLFATHYHELVELASYLPRVKNYNIAVSEDRGEVVFLHKIVPGGVDKSYGIHVAKLAGLPKWVIKRAYEVLTELENPAKKQPKSRTCQPQLQLPMTGQTSVLEEEIKELEIESLTPLAALNKLYELKKKAEEQGL.

An ATP-binding site is contributed by G613–S620.

Belongs to the DNA mismatch repair MutS family.

In terms of biological role, this protein is involved in the repair of mismatches in DNA. It is possible that it carries out the mismatch recognition step. This protein has a weak ATPase activity. The polypeptide is DNA mismatch repair protein MutS (Dehalococcoides mccartyi (strain ATCC BAA-2100 / JCM 16839 / KCTC 5957 / BAV1)).